Reading from the N-terminus, the 708-residue chain is Polyribonucleotide nucleotidyltransferase (708 aa).

Mg(2+)-binding residues include aspartate 488 and aspartate 494. One can recognise a KH domain in the interval 555 to 614; that stretch reads PRIYTMKIPQKKIAEVIGKGGATIRQLTEETGTTIEIGDDGTIKIAATDGESAANAISRI. The 69-residue stretch at 624–692 folds into the S1 motif domain; it reads GTIYEGKVVR…RQGRVRLSIK (69 aa).

This sequence belongs to the polyribonucleotide nucleotidyltransferase family. In terms of assembly, component of the RNA degradosome, which is a multiprotein complex involved in RNA processing and mRNA degradation. Mg(2+) is required as a cofactor.

The protein localises to the cytoplasm. It carries out the reaction RNA(n+1) + phosphate = RNA(n) + a ribonucleoside 5'-diphosphate. In terms of biological role, involved in mRNA degradation. Catalyzes the phosphorolysis of single-stranded polyribonucleotides processively in the 3'- to 5'-direction. The sequence is that of Polyribonucleotide nucleotidyltransferase from Pseudoalteromonas translucida (strain TAC 125).